A 100-amino-acid chain; its full sequence is NADH-quinone oxidoreductase subunit K (100 aa).

3 helical membrane passes run 1–21 (MIGLNHYLIVSGLLFCIGLAG), 28–48 (ILLLFFSTEIMLNAINIGFIA), and 64–84 (FIIAIAASEVAIGLGLVILWF).

It belongs to the complex I subunit 4L family. As to quaternary structure, NDH-1 is composed of 14 different subunits. Subunits NuoA, H, J, K, L, M, N constitute the membrane sector of the complex.

The protein resides in the cell inner membrane. It catalyses the reaction a quinone + NADH + 5 H(+)(in) = a quinol + NAD(+) + 4 H(+)(out). Its function is as follows. NDH-1 shuttles electrons from NADH, via FMN and iron-sulfur (Fe-S) centers, to quinones in the respiratory chain. The immediate electron acceptor for the enzyme in this species is believed to be ubiquinone. Couples the redox reaction to proton translocation (for every two electrons transferred, four hydrogen ions are translocated across the cytoplasmic membrane), and thus conserves the redox energy in a proton gradient. The protein is NADH-quinone oxidoreductase subunit K of Helicobacter pylori (strain G27).